Consider the following 134-residue polypeptide: 6,7-dimethyl-8-ribityllumazine synthase (134 aa).

Residues phenylalanine 12, 44-46, and 68-70 each bind 5-amino-6-(D-ribitylamino)uracil; these read VFD and SVI. Residue 73–74 coordinates (2S)-2-hydroxy-3-oxobutyl phosphate; sequence DT. Histidine 76 acts as the Proton donor in catalysis. Leucine 101 contributes to the 5-amino-6-(D-ribitylamino)uracil binding site. Arginine 116 contacts (2S)-2-hydroxy-3-oxobutyl phosphate.

It belongs to the DMRL synthase family.

It catalyses the reaction (2S)-2-hydroxy-3-oxobutyl phosphate + 5-amino-6-(D-ribitylamino)uracil = 6,7-dimethyl-8-(1-D-ribityl)lumazine + phosphate + 2 H2O + H(+). Its pathway is cofactor biosynthesis; riboflavin biosynthesis; riboflavin from 2-hydroxy-3-oxobutyl phosphate and 5-amino-6-(D-ribitylamino)uracil: step 1/2. Functionally, catalyzes the formation of 6,7-dimethyl-8-ribityllumazine by condensation of 5-amino-6-(D-ribitylamino)uracil with 3,4-dihydroxy-2-butanone 4-phosphate. This is the penultimate step in the biosynthesis of riboflavin. The chain is 6,7-dimethyl-8-ribityllumazine synthase from Methanosarcina barkeri (strain Fusaro / DSM 804).